A 538-amino-acid chain; its full sequence is Bifunctional purine biosynthesis protein PurH (538 aa).

Residues 8 to 158 form the MGS-like domain; sequence IPAPDKVEIK…KNHAYVTTLT (151 aa).

This sequence belongs to the PurH family.

The enzyme catalyses (6R)-10-formyltetrahydrofolate + 5-amino-1-(5-phospho-beta-D-ribosyl)imidazole-4-carboxamide = 5-formamido-1-(5-phospho-D-ribosyl)imidazole-4-carboxamide + (6S)-5,6,7,8-tetrahydrofolate. It catalyses the reaction IMP + H2O = 5-formamido-1-(5-phospho-D-ribosyl)imidazole-4-carboxamide. It functions in the pathway purine metabolism; IMP biosynthesis via de novo pathway; 5-formamido-1-(5-phospho-D-ribosyl)imidazole-4-carboxamide from 5-amino-1-(5-phospho-D-ribosyl)imidazole-4-carboxamide (10-formyl THF route): step 1/1. It participates in purine metabolism; IMP biosynthesis via de novo pathway; IMP from 5-formamido-1-(5-phospho-D-ribosyl)imidazole-4-carboxamide: step 1/1. This Rhizobium johnstonii (strain DSM 114642 / LMG 32736 / 3841) (Rhizobium leguminosarum bv. viciae) protein is Bifunctional purine biosynthesis protein PurH.